Reading from the N-terminus, the 357-residue chain is FPYQGSSIMLESGKVNDYEVVYPRKVTALPKGAVQQKYEDTMQYEFKVNGEPVVLHLEKNKGLFSKDYSEIHYSPDGRRITTHPLVEGHCYYRGHIRNDADSTASISACNGLKGHFKIQGETYFIESLKLSDSEAHAVFKYENVEKEDEAHKMCGVTQNWESYEPIKKASQLIVSTEFQRYMEIVIVVDHSMYTKYKGDSDKIKAWVYEMINTISESYRYLYIDIIVSALEMWSEKDLINVETSAENTLKSFGEWRAKDLIHRISHDNAQLLTATDFDGPTIGLAYVASMCDPKRSVGVVQDHSSVNHLVAITLAHEIAHNLGVHHDEGSCSCGSGYTCIMSPVINSEVIKYFLDSK.

An N-terminal signal peptide occupies residues 1 to 6; it reads FPYQGS. Residues 7–176 constitute a propeptide that is removed on maturation; sequence SIMLESGKVN…KKASQLIVST (170 aa). The Peptidase M12B domain occupies 180 to 357; sequence RYMEIVIVVD…EVIKYFLDSK (178 aa). His-316 serves as a coordination point for Zn(2+). Glu-317 is an active-site residue. Zn(2+) is bound by residues His-320 and His-326. Cys-333 and Cys-339 form a disulfide bridge.

Belongs to the venom metalloproteinase (M12B) family. P-I subfamily. As to quaternary structure, monomer. Zn(2+) serves as cofactor. As to expression, expressed by the venom gland.

It localises to the secreted. Its function is as follows. Snake venom metalloproteinase that impairs hemostasis in the envenomed animal. This Deinagkistrodon acutus (Hundred-pace snake) protein is Snake venom metalloproteinase H4.